The following is a 104-amino-acid chain: N(2)-fixation sustaining protein CowN (104 aa).

This sequence belongs to the CowN family.

Functionally, is required to sustain N(2)-dependent growth in the presence of low levels of carbon monoxide (CO). Probably acts by protecting the N(2) fixation ability of the nitrogenase complex, which is inactivated in the presence of CO. In Arcobacter nitrofigilis (strain ATCC 33309 / DSM 7299 / CCUG 15893 / LMG 7604 / NCTC 12251 / CI) (Campylobacter nitrofigilis), this protein is N(2)-fixation sustaining protein CowN.